The sequence spans 283 residues: Pantothenate synthetase (283 aa).

Residue 30-37 participates in ATP binding; that stretch reads MGNLHAGH. Residue His37 is the Proton donor of the active site. Gln61 lines the (R)-pantoate pocket. Gln61 contributes to the beta-alanine binding site. 149–152 contributes to the ATP binding site; sequence GRKD. Gln155 is a binding site for (R)-pantoate. An ATP-binding site is contributed by 186-189; sequence LSSR.

The protein belongs to the pantothenate synthetase family. As to quaternary structure, homodimer.

It localises to the cytoplasm. It catalyses the reaction (R)-pantoate + beta-alanine + ATP = (R)-pantothenate + AMP + diphosphate + H(+). It functions in the pathway cofactor biosynthesis; (R)-pantothenate biosynthesis; (R)-pantothenate from (R)-pantoate and beta-alanine: step 1/1. In terms of biological role, catalyzes the condensation of pantoate with beta-alanine in an ATP-dependent reaction via a pantoyl-adenylate intermediate. In Chromohalobacter salexigens (strain ATCC BAA-138 / DSM 3043 / CIP 106854 / NCIMB 13768 / 1H11), this protein is Pantothenate synthetase.